An 802-amino-acid polypeptide reads, in one-letter code: Phenylalanine--tRNA ligase beta subunit (802 aa).

Residues 40-149 enclose the tRNA-binding domain; it reads RPELDFVKIV…EGAEIGKTIR (110 aa). Residues 407 to 484 enclose the B5 domain; it reads HKEVRIHTDI…RTRGYDTIQV (78 aa). Residues aspartate 462, aspartate 468, glutamate 471, and glutamate 472 each coordinate Mg(2+). The region spanning 710 to 802 is the FDX-ACB domain; sequence SQFPEAEIDI…LAGKNGFVLR (93 aa).

The protein belongs to the phenylalanyl-tRNA synthetase beta subunit family. Type 1 subfamily. Tetramer of two alpha and two beta subunits. The cofactor is Mg(2+).

The protein localises to the cytoplasm. The enzyme catalyses tRNA(Phe) + L-phenylalanine + ATP = L-phenylalanyl-tRNA(Phe) + AMP + diphosphate + H(+). The polypeptide is Phenylalanine--tRNA ligase beta subunit (Leptospira borgpetersenii serovar Hardjo-bovis (strain L550)).